Here is a 726-residue protein sequence, read N- to C-terminus: Catalase-peroxidase (726 aa).

Residues 1–12 show a composition bias toward polar residues; sequence MSTPSDQHNTLS. The tract at residues 1–34 is disordered; that stretch reads MSTPSDQHNTLSAGKCPFHQGNSNQTAGGGTSSR. Residues 105–226 constitute a cross-link (tryptophyl-tyrosyl-methioninium (Trp-Tyr) (with M-252)); the sequence is WHSAGTYRSA…LGATEMGLIY (122 aa). The active-site Proton acceptor is the His-106. The segment at residues 226 to 252 is a cross-link (tryptophyl-tyrosyl-methioninium (Tyr-Met) (with W-105)); sequence YVNPEGPNHSGDPASAAPAIRATFGNM. His-267 provides a ligand contact to heme b.

It belongs to the peroxidase family. Peroxidase/catalase subfamily. Homodimer or homotetramer. It depends on heme b as a cofactor. Post-translationally, formation of the three residue Trp-Tyr-Met cross-link is important for the catalase, but not the peroxidase activity of the enzyme.

The catalysed reaction is H2O2 + AH2 = A + 2 H2O. It carries out the reaction 2 H2O2 = O2 + 2 H2O. Functionally, bifunctional enzyme with both catalase and broad-spectrum peroxidase activity. The polypeptide is Catalase-peroxidase (Cronobacter sakazakii (strain ATCC BAA-894) (Enterobacter sakazakii)).